The sequence spans 968 residues: Phosphatidylserine decarboxylase 2 proenzyme (968 aa).

Positions 1 to 25 are cleaved as a signal peptide; it reads MAKVMRLIIFVCVALVAISVPAASS. Residues D500, H570, and S683 each act as charge relay system; for autoendoproteolytic cleavage activity in the active site. The active-site Schiff-base intermediate with substrate; via pyruvic acid; for decarboxylase activity is the S683. A Pyruvic acid (Ser); by autocatalysis modification is found at S683.

This sequence belongs to the phosphatidylserine decarboxylase family. In terms of assembly, heterodimer of a large membrane-associated beta subunit and a small pyruvoyl-containing alpha subunit. It depends on pyruvate as a cofactor. Post-translationally, is synthesized initially as an inactive proenzyme. Formation of the active enzyme involves a self-maturation process in which the active site pyruvoyl group is generated from an internal serine residue via an autocatalytic post-translational modification. Two non-identical subunits are generated from the proenzyme in this reaction, and the pyruvate is formed at the N-terminus of the alpha chain, which is derived from the carboxyl end of the proenzyme. The autoendoproteolytic cleavage occurs by a canonical serine protease mechanism, in which the side chain hydroxyl group of the serine supplies its oxygen atom to form the C-terminus of the beta chain, while the remainder of the serine residue undergoes an oxidative deamination to produce ammonia and the pyruvoyl prosthetic group on the alpha chain. During this reaction, the Ser that is part of the protease active site of the proenzyme becomes the pyruvoyl prosthetic group, which constitutes an essential element of the active site of the mature decarboxylase.

It is found in the parasitophorous vacuole. It localises to the cytoplasmic vesicle. The protein localises to the secretory vesicle. It catalyses the reaction a 1,2-diacyl-sn-glycero-3-phospho-L-serine + H(+) = a 1,2-diacyl-sn-glycero-3-phosphoethanolamine + CO2. Its pathway is phospholipid metabolism; phosphatidylethanolamine biosynthesis; phosphatidylethanolamine from CDP-diacylglycerol: step 2/2. Functionally, catalyzes the formation of phosphatidylethanolamine (PtdEtn) from phosphatidylserine (PtdSer). Plays a central role in phospholipid metabolism and in the interorganelle trafficking of phosphatidylserine. Can act on liposomal and host cell PtdSer. The chain is Phosphatidylserine decarboxylase 2 proenzyme from Toxoplasma gondii (strain ATCC 50853 / GT1).